Consider the following 118-residue polypeptide: Small ribosomal subunit protein bS6 (118 aa).

The protein belongs to the bacterial ribosomal protein bS6 family.

In terms of biological role, binds together with bS18 to 16S ribosomal RNA. The protein is Small ribosomal subunit protein bS6 of Parabacteroides distasonis (strain ATCC 8503 / DSM 20701 / CIP 104284 / JCM 5825 / NCTC 11152).